The sequence spans 350 residues: GTPase Obg (350 aa).

The Obg domain occupies 1-159 (MKLVDEAEIL…RLLKLELKLL (159 aa)). The OBG-type G domain maps to 160–337 (ADVGLLGFPN…IMKDVMAFFD (178 aa)). Residues 166-173 (GFPNAGKS), 191-195 (FTTLY), 213-216 (DVPG), 287-290 (NKAD), and 318-320 (SAL) contribute to the GTP site. Residues S173 and T193 each contribute to the Mg(2+) site.

Belongs to the TRAFAC class OBG-HflX-like GTPase superfamily. OBG GTPase family. Monomer. Mg(2+) is required as a cofactor.

The protein localises to the cytoplasm. In terms of biological role, an essential GTPase which binds GTP, GDP and possibly (p)ppGpp with moderate affinity, with high nucleotide exchange rates and a fairly low GTP hydrolysis rate. Plays a role in control of the cell cycle, stress response, ribosome biogenesis and in those bacteria that undergo differentiation, in morphogenesis control. The sequence is that of GTPase Obg from Xanthomonas campestris pv. campestris (strain 8004).